A 654-amino-acid polypeptide reads, in one-letter code: Acetyl-coenzyme A synthetase (654 aa).

CoA-binding positions include 190-193 (RGGK) and Thr-313. Residues 389-391 (GEP), 413-418 (DTWWQT), Asp-504, and Arg-519 each bind ATP. CoA is bound at residue Ser-527. Residue Arg-530 participates in ATP binding. Mg(2+) contacts are provided by Val-541 and Val-546. At Lys-613 the chain carries N6-acetyllysine.

Belongs to the ATP-dependent AMP-binding enzyme family. Mg(2+) is required as a cofactor. Post-translationally, acetylated. Deacetylation by the SIR2-homolog deacetylase activates the enzyme.

The catalysed reaction is acetate + ATP + CoA = acetyl-CoA + AMP + diphosphate. Its function is as follows. Catalyzes the conversion of acetate into acetyl-CoA (AcCoA), an essential intermediate at the junction of anabolic and catabolic pathways. AcsA undergoes a two-step reaction. In the first half reaction, AcsA combines acetate with ATP to form acetyl-adenylate (AcAMP) intermediate. In the second half reaction, it can then transfer the acetyl group from AcAMP to the sulfhydryl group of CoA, forming the product AcCoA. This is Acetyl-coenzyme A synthetase from Leptospira borgpetersenii serovar Hardjo-bovis (strain JB197).